We begin with the raw amino-acid sequence, 174 residues long: Solute carrier family 2, facilitated glucose transporter member 4 (174 aa).

Over 1–19 the chain is Cytoplasmic; sequence QQIGSEDGEPPQQRVTGTL. An interaction with SRFBP1 region spans residues 2-8; that stretch reads QIGSEDG. The residue at position 5 (Ser5) is a Phosphoserine. Residues 20–40 form a helical membrane-spanning segment; it reads VLAVFSAVLGSLQFGYNIGVI. Over 41-76 the chain is Extracellular; it reads NAPQKVIEQSYNETWLGRQGPNGPGSIPPGTLTTLW. A glycan (N-linked (GlcNAc...) asparagine) is linked at Asn52. Residues 77–97 traverse the membrane as a helical segment; that stretch reads ALSVAIFSVGGMFSSFLLGII. Over 98–114 the chain is Cytoplasmic; the sequence is SQWLGRKKAMLFNNTLA. The chain crosses the membrane as a helical span at residues 115–135; the sequence is VLAGALMGLAKAAASYEMLIL. The Extracellular segment spans residues 136–137; the sequence is GR. Residues 138–158 form a helical membrane-spanning segment; that stretch reads FLIGAYSGLASGLVPMYVGEI. The Cytoplasmic portion of the chain corresponds to 159 to 166; sequence APTHLRGA. Residues 167-174 traverse the membrane as a helical segment; that stretch reads LGTLNQLA.

This sequence belongs to the major facilitator superfamily. Sugar transporter (TC 2.A.1.1) family. Glucose transporter subfamily. As to quaternary structure, binds to DAXX. Interacts via its N-terminus with SRFBP1. Interacts with NDUFA9. Interacts with TRARG1; the interaction is required for proper SLC2A4 recycling after insulin stimulation. Sumoylated. In terms of processing, palmitoylated. Palmitoylation by ZDHHC7 controls the insulin-dependent translocation of GLUT4 to the plasma membrane.

Its subcellular location is the cell membrane. The protein resides in the endomembrane system. It localises to the cytoplasm. The protein localises to the perinuclear region. The catalysed reaction is D-glucose(out) = D-glucose(in). Functionally, insulin-regulated facilitative glucose transporter, which plays a key role in removal of glucose from circulation. Response to insulin is regulated by its intracellular localization: in the absence of insulin, it is efficiently retained intracellularly within storage compartments in muscle and fat cells. Upon insulin stimulation, translocates from these compartments to the cell surface where it transports glucose from the extracellular milieu into the cell. In Sus scrofa (Pig), this protein is Solute carrier family 2, facilitated glucose transporter member 4.